Here is a 400-residue protein sequence, read N- to C-terminus: Phosphoglycerate kinase (400 aa).

Substrate is bound by residues 23-25, Arg-38, 61-64, Arg-120, and Arg-153; these read DLN and HFGR. ATP contacts are provided by residues Lys-203, Glu-325, and 355–358; that span reads GGDT.

The protein belongs to the phosphoglycerate kinase family. In terms of assembly, monomer.

Its subcellular location is the cytoplasm. It catalyses the reaction (2R)-3-phosphoglycerate + ATP = (2R)-3-phospho-glyceroyl phosphate + ADP. Its pathway is carbohydrate degradation; glycolysis; pyruvate from D-glyceraldehyde 3-phosphate: step 2/5. The sequence is that of Phosphoglycerate kinase from Methylorubrum populi (strain ATCC BAA-705 / NCIMB 13946 / BJ001) (Methylobacterium populi).